The following is a 307-amino-acid chain: HPr kinase/phosphorylase (307 aa).

Residues His-136 and Lys-157 contribute to the active site. ATP is bound at residue 151–158 (GESGIGKS). Residue Ser-158 participates in Mg(2+) binding. Asp-175 functions as the Proton acceptor; for phosphorylation activity. Proton donor; for dephosphorylation activity in the catalytic mechanism. The segment at 198-207 (LEVRGMGIID) is important for the catalytic mechanism of both phosphorylation and dephosphorylation. Mg(2+) is bound at residue Glu-199. Arg-240 is an active-site residue. The important for the catalytic mechanism of dephosphorylation stretch occupies residues 261–266 (PIRPGR).

The protein belongs to the HPrK/P family. As to quaternary structure, homohexamer. Mg(2+) serves as cofactor.

The enzyme catalyses [HPr protein]-L-serine + ATP = [HPr protein]-O-phospho-L-serine + ADP + H(+). It catalyses the reaction [HPr protein]-O-phospho-L-serine + phosphate + H(+) = [HPr protein]-L-serine + diphosphate. In terms of biological role, catalyzes the ATP- as well as the pyrophosphate-dependent phosphorylation of a specific serine residue in HPr, a phosphocarrier protein of the phosphoenolpyruvate-dependent sugar phosphotransferase system (PTS). HprK/P also catalyzes the pyrophosphate-producing, inorganic phosphate-dependent dephosphorylation (phosphorolysis) of seryl-phosphorylated HPr (P-Ser-HPr). The two antagonistic activities of HprK/P are regulated by several intracellular metabolites, which change their concentration in response to the absence or presence of rapidly metabolisable carbon sources (glucose, fructose, etc.) in the growth medium. Therefore, by controlling the phosphorylation state of HPr, HPrK/P is a sensor enzyme that plays a major role in the regulation of carbon metabolism and sugar transport: it mediates carbon catabolite repression (CCR), and regulates PTS-catalyzed carbohydrate uptake and inducer exclusion. The sequence is that of HPr kinase/phosphorylase from Clostridium perfringens (strain 13 / Type A).